A 230-amino-acid polypeptide reads, in one-letter code: U2 small nuclear ribonucleoprotein A' (230 aa).

LRR repeat units lie at residues 15 to 36 (SLRN…NADT), 48 to 69 (GDRE…GVTE), 71 to 92 (HYTS…PRLE), 93 to 114 (TLRT…KNIA), and 115 to 136 (KLET…ESLK). The LRRCT domain occupies 149–187 (NPVQHVPRYRSYMISILPSLRMLDFQRVTQKERDEAEAM).

This sequence belongs to the U2 small nuclear ribonucleoprotein A family. In terms of assembly, associated with the spliceosome.

The protein resides in the nucleus. Involved in pre-mRNA splicing. The chain is U2 small nuclear ribonucleoprotein A' (LEA1) from Yarrowia lipolytica (strain CLIB 122 / E 150) (Yeast).